A 130-amino-acid polypeptide reads, in one-letter code: MSLMDPLADALTNIRNNELQVKDSCVISPASKLIGEVLSTMQKENYIGNFEYIDDNRAGQFKVELEGNINKCGVIKPRHAVKKDEFEKFEKRYLPAKNFGILIVTTPEGIMTHYEAKERGIGGRLLAYMY.

It belongs to the universal ribosomal protein uS8 family. Part of the 30S ribosomal subunit.

Functionally, one of the primary rRNA binding proteins, it binds directly to 16S rRNA central domain where it helps coordinate assembly of the platform of the 30S subunit. This Methanobrevibacter smithii (strain ATCC 35061 / DSM 861 / OCM 144 / PS) protein is Small ribosomal subunit protein uS8.